A 198-amino-acid chain; its full sequence is Heme oxygenase PigA (198 aa).

Residue H26 coordinates heme b.

It belongs to the heme oxygenase family.

The enzyme catalyses heme b + 3 AH2 + 3 O2 + 2 H(+) = biliverdin IXbeta + CO + Fe(2+) + 3 A + 3 H2O. It catalyses the reaction heme b + 3 AH2 + 3 O2 + 3 H(+) = biliverdin IXdelta + CO + Fe(2+) + 3 A + 3 H2O. Functionally, involved in heme degradation. Catalyzes the degradation of heme to biliverdin, with the release of iron. Forms biliverdin delta (70%) and beta (30%). Under anaerobic conditions ferredoxin--NADP(+) reductase (fpr) can provide the necessary electrons; Bfd is not required. The chain is Heme oxygenase PigA from Pseudomonas aeruginosa (strain ATCC 15692 / DSM 22644 / CIP 104116 / JCM 14847 / LMG 12228 / 1C / PRS 101 / PAO1).